A 298-amino-acid polypeptide reads, in one-letter code: MAPSQLPPIFNPTSQDIEMLLAAQCHLGSKNLQSHMEPYLWKTRPDGVNVINIGKTWEKILLAARIIAAIDNPADICVISARPYGQRAVLKFASHTGATAIAGRFTPGNFTNYITRSFKEPRLIIVTDPRTDAQAIKEASYVNIPVIALCDTDSPTDFVDVAIPTNNKGRHAIGLVWWLLAREVLRLRGTLASREVDWDVVVDLYFYRDPEAEENKEVVEEKVASAEEVGAGAIESGFAGENWDVAGAGAGVPGTAFAAASAAAGAASWEAEGGDWAASSAAPAGESWAEAQPTEAKW.

The disordered stretch occupies residues 272–298 (EGGDWAASSAAPAGESWAEAQPTEAKW).

It belongs to the universal ribosomal protein uS2 family. As to quaternary structure, component of the small ribosomal subunit. Mature ribosomes consist of a small (40S) and a large (60S) subunit. The 40S subunit contains about 33 different proteins and 1 molecule of RNA (18S). The 60S subunit contains about 49 different proteins and 3 molecules of RNA (25S, 5.8S and 5S). Interacts with rps21.

It is found in the cytoplasm. Functionally, required for the assembly and/or stability of the 40S ribosomal subunit. Required for the processing of the 20S rRNA-precursor to mature 18S rRNA in a late step of the maturation of 40S ribosomal subunits. The sequence is that of Small ribosomal subunit protein uS2 (rps0) from Aspergillus niger (strain ATCC MYA-4892 / CBS 513.88 / FGSC A1513).